The following is a 704-amino-acid chain: Elongation factor G (704 aa).

Residues 10-290 (NKVRNIGIMA…AVVDFLPNPL (281 aa)) enclose the tr-type G domain. GTP contacts are provided by residues 19–26 (AHIDAGKT), 83–87 (DTPGH), and 137–140 (NKMD).

It belongs to the TRAFAC class translation factor GTPase superfamily. Classic translation factor GTPase family. EF-G/EF-2 subfamily.

The protein resides in the cytoplasm. Catalyzes the GTP-dependent ribosomal translocation step during translation elongation. During this step, the ribosome changes from the pre-translocational (PRE) to the post-translocational (POST) state as the newly formed A-site-bound peptidyl-tRNA and P-site-bound deacylated tRNA move to the P and E sites, respectively. Catalyzes the coordinated movement of the two tRNA molecules, the mRNA and conformational changes in the ribosome. The polypeptide is Elongation factor G (Paenarthrobacter aurescens (strain TC1)).